The sequence spans 205 residues: Small ribosomal subunit protein uS4 (205 aa).

Residues 20 to 44 (WGRPKSPVNRREYGPGQHGQRRKGK) are disordered. The S4 RNA-binding domain occupies 94-154 (SRLDAIVYRS…ERSKQLLLVL (61 aa)).

It belongs to the universal ribosomal protein uS4 family. Part of the 30S ribosomal subunit. Contacts protein S5. The interaction surface between S4 and S5 is involved in control of translational fidelity.

Its function is as follows. One of the primary rRNA binding proteins, it binds directly to 16S rRNA where it nucleates assembly of the body of the 30S subunit. In terms of biological role, with S5 and S12 plays an important role in translational accuracy. In Bartonella bacilliformis (strain ATCC 35685 / KC583 / Herrer 020/F12,63), this protein is Small ribosomal subunit protein uS4.